The following is a 253-amino-acid chain: MADSGSDAPISNRPEEEVTVEKTPEMEAAAEEERLRYLEFVQQAAAQVLVLAAAAYAYAKQGAGPLRPGVDHVEGTVKAVVGPVYDRFHGVPLDLLKFLDRKVGESVQELDRRVPPVVKEAPGLARSAAAEVRQAGLVGTATGLAKSAIARAEPRARDLYTRYEPVAERKAAEAWAALNRLPLVPSVTRAVLPAAASLSARYNTAVADGAKRGSAVATYLPLVPTERLSRVFGYPLADAAASPAPEMQPIPSQ.

The segment at 1 to 26 (MADSGSDAPISNRPEEEVTVEKTPEM) is disordered. Residues 13–26 (RPEEEVTVEKTPEM) are compositionally biased toward basic and acidic residues.

It belongs to the REF/SRPP family.

The chain is REF/SRPP-like protein OsI_017815 from Oryza sativa subsp. indica (Rice).